The following is a 520-amino-acid chain: 2,3-bisphosphoglycerate-independent phosphoglycerate mutase (520 aa).

2 residues coordinate Mn(2+): aspartate 13 and serine 63. The active-site Phosphoserine intermediate is serine 63. Substrate contacts are provided by residues histidine 124, 154-155, arginine 192, arginine 198, 268-271, and lysine 342; these read RD and RADR. Mn(2+) contacts are provided by aspartate 409, histidine 413, aspartate 450, histidine 451, and histidine 469.

Belongs to the BPG-independent phosphoglycerate mutase family. Monomer. The cofactor is Mn(2+).

The enzyme catalyses (2R)-2-phosphoglycerate = (2R)-3-phosphoglycerate. Its pathway is carbohydrate degradation; glycolysis; pyruvate from D-glyceraldehyde 3-phosphate: step 3/5. Its function is as follows. Catalyzes the interconversion of 2-phosphoglycerate and 3-phosphoglycerate. This is 2,3-bisphosphoglycerate-independent phosphoglycerate mutase from Colwellia psychrerythraea (strain 34H / ATCC BAA-681) (Vibrio psychroerythus).